Reading from the N-terminus, the 455-residue chain is Probable glycine dehydrogenase (decarboxylating) subunit 1 (455 aa).

It belongs to the GcvP family. N-terminal subunit subfamily. As to quaternary structure, the glycine cleavage system is composed of four proteins: P, T, L and H. In this organism, the P 'protein' is a heterodimer of two subunits.

It carries out the reaction N(6)-[(R)-lipoyl]-L-lysyl-[glycine-cleavage complex H protein] + glycine + H(+) = N(6)-[(R)-S(8)-aminomethyldihydrolipoyl]-L-lysyl-[glycine-cleavage complex H protein] + CO2. Functionally, the glycine cleavage system catalyzes the degradation of glycine. The P protein binds the alpha-amino group of glycine through its pyridoxal phosphate cofactor; CO(2) is released and the remaining methylamine moiety is then transferred to the lipoamide cofactor of the H protein. The polypeptide is Probable glycine dehydrogenase (decarboxylating) subunit 1 (Francisella tularensis subsp. holarctica (strain FTNF002-00 / FTA)).